The primary structure comprises 364 residues: UDP-N-acetylglucosamine--N-acetylmuramyl-(pentapeptide) pyrophosphoryl-undecaprenol N-acetylglucosamine transferase (364 aa).

Residues 10 to 12 (TGG), Asn-124, Arg-166, Ser-196, and Gln-297 each bind UDP-N-acetyl-alpha-D-glucosamine.

The protein belongs to the glycosyltransferase 28 family. MurG subfamily.

Its subcellular location is the cell membrane. It carries out the reaction di-trans,octa-cis-undecaprenyl diphospho-N-acetyl-alpha-D-muramoyl-L-alanyl-D-glutamyl-meso-2,6-diaminopimeloyl-D-alanyl-D-alanine + UDP-N-acetyl-alpha-D-glucosamine = di-trans,octa-cis-undecaprenyl diphospho-[N-acetyl-alpha-D-glucosaminyl-(1-&gt;4)]-N-acetyl-alpha-D-muramoyl-L-alanyl-D-glutamyl-meso-2,6-diaminopimeloyl-D-alanyl-D-alanine + UDP + H(+). Its pathway is cell wall biogenesis; peptidoglycan biosynthesis. Cell wall formation. Catalyzes the transfer of a GlcNAc subunit on undecaprenyl-pyrophosphoryl-MurNAc-pentapeptide (lipid intermediate I) to form undecaprenyl-pyrophosphoryl-MurNAc-(pentapeptide)GlcNAc (lipid intermediate II). The protein is UDP-N-acetylglucosamine--N-acetylmuramyl-(pentapeptide) pyrophosphoryl-undecaprenol N-acetylglucosamine transferase of Thermoanaerobacter pseudethanolicus (strain ATCC 33223 / 39E) (Clostridium thermohydrosulfuricum).